The sequence spans 505 residues: 2-isopropylmalate synthase (505 aa).

The 263-residue stretch at Val5–Tyr267 folds into the Pyruvate carboxyltransferase domain. Mn(2+) is bound by residues Asp14, His202, His204, and Asn238. The tract at residues Thr391–Lys505 is regulatory domain.

It belongs to the alpha-IPM synthase/homocitrate synthase family. LeuA type 1 subfamily. In terms of assembly, homodimer. Mn(2+) is required as a cofactor.

The protein localises to the cytoplasm. The enzyme catalyses 3-methyl-2-oxobutanoate + acetyl-CoA + H2O = (2S)-2-isopropylmalate + CoA + H(+). It participates in amino-acid biosynthesis; L-leucine biosynthesis; L-leucine from 3-methyl-2-oxobutanoate: step 1/4. In terms of biological role, catalyzes the condensation of the acetyl group of acetyl-CoA with 3-methyl-2-oxobutanoate (2-ketoisovalerate) to form 3-carboxy-3-hydroxy-4-methylpentanoate (2-isopropylmalate). This Pelotomaculum thermopropionicum (strain DSM 13744 / JCM 10971 / SI) protein is 2-isopropylmalate synthase.